A 220-amino-acid polypeptide reads, in one-letter code: UPF0711 protein C18orf21 (220 aa).

The interval 117–181 is disordered; sequence SRSFVSTLKS…VSTCSSKNTS (65 aa). Over residues 119–136 the composition is skewed to polar residues; that stretch reads SFVSTLKSNPATPTSKLS. The residue at position 126 (S126) is a Phosphoserine. T130 and T139 each carry phosphothreonine. Positions 171-180 are enriched in low complexity; sequence SVSTCSSKNT.

This sequence belongs to the UPF0711 family.

The chain is UPF0711 protein C18orf21 (C18orf21) from Homo sapiens (Human).